The following is a 107-amino-acid chain: Large ribosomal subunit protein uL24 (107 aa).

The protein belongs to the universal ribosomal protein uL24 family. In terms of assembly, part of the 50S ribosomal subunit.

In terms of biological role, one of two assembly initiator proteins, it binds directly to the 5'-end of the 23S rRNA, where it nucleates assembly of the 50S subunit. One of the proteins that surrounds the polypeptide exit tunnel on the outside of the subunit. The chain is Large ribosomal subunit protein uL24 from Streptomyces coelicolor (strain ATCC BAA-471 / A3(2) / M145).